The primary structure comprises 591 residues: L-fucose isomerase (591 aa).

Residues E337 and D361 each act as proton acceptor in the active site. The Mn(2+) site is built by E337, D361, and H528.

The protein belongs to the L-fucose isomerase family. Homohexamer. Requires Mn(2+) as cofactor.

The protein localises to the cytoplasm. The catalysed reaction is L-fucose = L-fuculose. It functions in the pathway carbohydrate degradation; L-fucose degradation; L-lactaldehyde and glycerone phosphate from L-fucose: step 1/3. Functionally, converts the aldose L-fucose into the corresponding ketose L-fuculose. In Escherichia coli (strain SE11), this protein is L-fucose isomerase.